The primary structure comprises 157 residues: Crossover junction endodeoxyribonuclease RuvC (157 aa).

Active-site residues include Asp7, Glu67, and Asp139. Mg(2+) contacts are provided by Asp7, Glu67, and Asp139.

It belongs to the RuvC family. Homodimer which binds Holliday junction (HJ) DNA. The HJ becomes 2-fold symmetrical on binding to RuvC with unstacked arms; it has a different conformation from HJ DNA in complex with RuvA. In the full resolvosome a probable DNA-RuvA(4)-RuvB(12)-RuvC(2) complex forms which resolves the HJ. Requires Mg(2+) as cofactor.

The protein resides in the cytoplasm. It catalyses the reaction Endonucleolytic cleavage at a junction such as a reciprocal single-stranded crossover between two homologous DNA duplexes (Holliday junction).. The RuvA-RuvB-RuvC complex processes Holliday junction (HJ) DNA during genetic recombination and DNA repair. Endonuclease that resolves HJ intermediates. Cleaves cruciform DNA by making single-stranded nicks across the HJ at symmetrical positions within the homologous arms, yielding a 5'-phosphate and a 3'-hydroxyl group; requires a central core of homology in the junction. The consensus cleavage sequence is 5'-(A/T)TT(C/G)-3'. Cleavage occurs on the 3'-side of the TT dinucleotide at the point of strand exchange. HJ branch migration catalyzed by RuvA-RuvB allows RuvC to scan DNA until it finds its consensus sequence, where it cleaves and resolves the cruciform DNA. This chain is Crossover junction endodeoxyribonuclease RuvC, found in Prochlorococcus marinus (strain AS9601).